We begin with the raw amino-acid sequence, 499 residues long: Serine/threonine protein phosphatase 2A 57 kDa regulatory subunit B' beta isoform (499 aa).

The segment covering 1–13 (MFKKIMKGGHRKP) has biased composition (basic residues). A disordered region spans residues 1–65 (MFKKIMKGGH…PVTATPPPPP (65 aa)).

It belongs to the phosphatase 2A regulatory subunit B56 family. In terms of assembly, PP2A consists of a common heteromeric enzyme, composed of a catalytic subunit (subunits C), a constant regulatory subunit (subunit A), and a variety of regulatory subunits such as subunits B (the R2/B/PR55/B55, R3/B''/PR72/PR130/PR59 and R5/B'/B56 families). Interacts with BZR1. Interacts with BRI1. Interacts with SRK2E/OST1. Expressed ubiquitously, higher levels in cotyledons and flowers.

Its subcellular location is the nucleus. The protein localises to the cytoplasm. The B regulatory subunit may modulate substrate selectivity and catalytic activity, and may also direct the localization of the catalytic enzyme to a particular subcellular compartment. Required for the formation of the PP2A holoenzyme that positively regulates brassinosteroid signaling by dephosphorylating and activating BZR1. The chain is Serine/threonine protein phosphatase 2A 57 kDa regulatory subunit B' beta isoform (B'BETA) from Arabidopsis thaliana (Mouse-ear cress).